The sequence spans 298 residues: 1,2-dihydroxynaphthalene dioxygenase (298 aa).

2 consecutive VOC domains span residues glutamate 6 to glycine 121 and glycine 146 to glycine 267. Position 149 (histidine 149) interacts with Fe cation. Residues histidine 149, glutamine 196 to histidine 197, histidine 212, and tyrosine 253 each bind substrate. Histidine 212 serves as a coordination point for Fe cation. Glutamate 263 provides a ligand contact to Fe cation.

It belongs to the extradiol ring-cleavage dioxygenase family. In terms of assembly, homooctamer. Fe(2+) serves as cofactor.

The enzyme catalyses naphthalene-1,2-diol + O2 = 2-hydroxychromene-2-carboxylate + H(+). It participates in aromatic compound metabolism; naphthalene degradation. In terms of biological role, involved in the naphthalene and naphthalenesulfonate catabolic pathway. Catalyzes the meta-cleavage of 1,2-dihydroxynaphthalene (1,2-DHN) to yield 2-hydroxychromene-2-carboxylic acid. Can also cleave 1,2,5-trihydroxynaphthalene (1,2,5-THN), 1,2,6-trihydroxynaphthalene (1,2,6-THN), 1,2,7-trihydroxynaphthalene (1,2,7-THN), 2,3-dihydroxybiphenyl, 3,4-dihydroxybiphenyl, catechol, 3-methylcatechol and 4-methylcatechol. This Sphingobium xenophagum protein is 1,2-dihydroxynaphthalene dioxygenase (nsaC).